The following is a 461-amino-acid chain: Protein DVR-1 homolog (461 aa).

Residues 1–30 (MEYSRKTYLDLNIMAKYILILSLFFGPGLS) form the signal peptide. Residues 31 to 338 (WDVFYSGDED…QKKGGKRPRK (308 aa)) constitute a propeptide that is removed on maturation. A glycan (N-linked (GlcNAc...) asparagine) is linked at Asn-149. Positions 317-351 (SHLRRNRRAATRQKKGGKRPRKPDTDNDIASRDSA) are disordered. Positions 318–337 (HLRRNRRAATRQKKGGKRPR) are enriched in basic residues. Basic and acidic residues predominate over residues 338 to 347 (KPDTDNDIAS). 3 disulfides stabilise this stretch: Cys-360/Cys-426, Cys-389/Cys-458, and Cys-393/Cys-460. N-linked (GlcNAc...) asparagine glycosylation occurs at Asn-402.

This sequence belongs to the TGF-beta family. In terms of assembly, homodimer; disulfide-linked.

It is found in the secreted. The chain is Protein DVR-1 homolog (DVR1) from Strongylocentrotus purpuratus (Purple sea urchin).